The chain runs to 643 residues: Phosphomethylpyrimidine synthase (643 aa).

Substrate contacts are provided by residues asparagine 248, methionine 277, tyrosine 306, histidine 342, 362 to 364, 403 to 406, and glutamate 442; these read SRG and DGLR. Histidine 446 contacts Zn(2+). Tyrosine 469 provides a ligand contact to substrate. Residue histidine 510 participates in Zn(2+) binding. Residues cysteine 590, cysteine 593, and cysteine 598 each coordinate [4Fe-4S] cluster.

The protein belongs to the ThiC family. As to quaternary structure, homodimer. The cofactor is [4Fe-4S] cluster.

The catalysed reaction is 5-amino-1-(5-phospho-beta-D-ribosyl)imidazole + S-adenosyl-L-methionine = 4-amino-2-methyl-5-(phosphooxymethyl)pyrimidine + CO + 5'-deoxyadenosine + formate + L-methionine + 3 H(+). It participates in cofactor biosynthesis; thiamine diphosphate biosynthesis. Catalyzes the synthesis of the hydroxymethylpyrimidine phosphate (HMP-P) moiety of thiamine from aminoimidazole ribotide (AIR) in a radical S-adenosyl-L-methionine (SAM)-dependent reaction. The sequence is that of Phosphomethylpyrimidine synthase from Paraburkholderia phymatum (strain DSM 17167 / CIP 108236 / LMG 21445 / STM815) (Burkholderia phymatum).